We begin with the raw amino-acid sequence, 444 residues long: Enolase (444 aa).

Substrate is bound by residues His-163 and Glu-172. Residue Glu-215 is the Proton donor of the active site. 3 residues coordinate Mg(2+): Asp-250, Glu-300, and Asp-327. 2 residues coordinate substrate: Glu-300 and Asp-327. Residue Lys-352 is the Proton acceptor of the active site. Residues 379–382 (SHRS) and Lys-403 contribute to the substrate site.

This sequence belongs to the enolase family. Homodimer. Mg(2+) serves as cofactor.

It is found in the cytoplasm. The enzyme catalyses (2R)-2-phosphoglycerate = phosphoenolpyruvate + H2O. It functions in the pathway carbohydrate degradation; glycolysis; pyruvate from D-glyceraldehyde 3-phosphate: step 4/5. The protein is Enolase (PGH1) of Mesembryanthemum crystallinum (Common ice plant).